We begin with the raw amino-acid sequence, 60 residues long: MDPCECSKSGNCNCGGSCTCTNCSCKSCKKSCCPCCPSGCTKCASGCVCKGKTCDTSCCQ.

The beta stretch occupies residues 1–28 (MDPCECSKSGNCNCGGSCTCTNCSCKSC). Residues Cys4, Cys6, Cys12, Cys14, Cys18, Cys20, Cys23, Cys25, Cys28, Cys32, Cys33, Cys35, Cys36, Cys40, Cys43, Cys47, Cys49, Cys54, Cys58, and Cys59 each contribute to the a divalent metal cation site. Residues 29–60 (KKSCCPCCPSGCTKCASGCVCKGKTCDTSCCQ) form an alpha region.

This sequence belongs to the metallothionein superfamily. Type 1 family.

Metallothioneins have a high content of cysteine residues that bind various heavy metals. The protein is Metallothionein A (mta) of Parachaenichthys charcoti (Charcot's dragonfish).